The sequence spans 153 residues: Aspartate carbamoyltransferase regulatory chain (153 aa).

Zn(2+)-binding residues include cysteine 109, cysteine 114, cysteine 138, and cysteine 141.

This sequence belongs to the PyrI family. Contains catalytic and regulatory chains. Zn(2+) serves as cofactor.

In terms of biological role, involved in allosteric regulation of aspartate carbamoyltransferase. This chain is Aspartate carbamoyltransferase regulatory chain, found in Salmonella schwarzengrund (strain CVM19633).